A 588-amino-acid polypeptide reads, in one-letter code: Adenylate kinase 5, chloroplastic (588 aa).

A disordered region spans residues 1–34; it reads MASLSLSSAHFSSTSSSSRSSISTSSLSPSSTSL. The N-terminal 73 residues, 1–73, are a transit peptide targeting the chloroplast; that stretch reads MASLSLSSAH…SFSTSNSQIR (73 aa). Residue 89 to 94 participates in ATP binding; sequence ASGKGT. The segment at 109-138 is NMP; it reads STGDLLRAEVSSGTDIGKRAKEFMNSGSLV. AMP-binding positions include arginine 115, 136-138, 165-168, and glutamine 172; these read SLV and GFPR. The LID stretch occupies residues 202–235; sequence GRRLDPVTGKIYHIKNYPPESDEIKARLVTRPDD. Arginine 203 is an ATP binding site. AMP is bound by residues arginine 232 and arginine 243.

It belongs to the adenylate kinase family. In terms of assembly, monomer.

It localises to the plastid. Its subcellular location is the chloroplast. The catalysed reaction is AMP + ATP = 2 ADP. In terms of biological role, catalyzes the reversible transfer of the terminal phosphate group between ATP and AMP. The sequence is that of Adenylate kinase 5, chloroplastic from Arabidopsis thaliana (Mouse-ear cress).